Reading from the N-terminus, the 234-residue chain is Sugar fermentation stimulation protein homolog (234 aa).

The protein belongs to the SfsA family.

This Idiomarina loihiensis (strain ATCC BAA-735 / DSM 15497 / L2-TR) protein is Sugar fermentation stimulation protein homolog.